The chain runs to 239 residues: Cell number regulator 6 (239 aa).

Residues M1 to P10 are compositionally biased toward polar residues. The segment at M1–N33 is disordered. Basic and acidic residues predominate over residues L16–P29. 2 helical membrane-spanning segments follow: residues C107–F127 and F136–F156.

The protein belongs to the cornifelin family. In terms of tissue distribution, expressed in roots, leaves, stalks, apical meristems, immature ears, endosperm, pericarp and tassel spikelets.

Its subcellular location is the membrane. The polypeptide is Cell number regulator 6 (CNR6) (Zea mays (Maize)).